The sequence spans 475 residues: Ribulose bisphosphate carboxylase large chain (475 aa).

Residues 1 to 2 (MS) constitute a propeptide that is removed on maturation. Proline 3 is modified (N-acetylproline). Lysine 14 carries the N6,N6,N6-trimethyllysine modification. Positions 123 and 173 each coordinate substrate. Residue lysine 175 is the Proton acceptor of the active site. Position 177 (lysine 177) interacts with substrate. The Mg(2+) site is built by lysine 201, aspartate 203, and glutamate 204. An N6-carboxylysine modification is found at lysine 201. Catalysis depends on histidine 294, which acts as the Proton acceptor. 3 residues coordinate substrate: arginine 295, histidine 327, and serine 379.

Belongs to the RuBisCO large chain family. Type I subfamily. Heterohexadecamer of 8 large chains and 8 small chains; disulfide-linked. The disulfide link is formed within the large subunit homodimers. Mg(2+) serves as cofactor. In terms of processing, the disulfide bond which can form in the large chain dimeric partners within the hexadecamer appears to be associated with oxidative stress and protein turnover.

The protein resides in the plastid. It is found in the chloroplast. It carries out the reaction 2 (2R)-3-phosphoglycerate + 2 H(+) = D-ribulose 1,5-bisphosphate + CO2 + H2O. The enzyme catalyses D-ribulose 1,5-bisphosphate + O2 = 2-phosphoglycolate + (2R)-3-phosphoglycerate + 2 H(+). RuBisCO catalyzes two reactions: the carboxylation of D-ribulose 1,5-bisphosphate, the primary event in carbon dioxide fixation, as well as the oxidative fragmentation of the pentose substrate in the photorespiration process. Both reactions occur simultaneously and in competition at the same active site. This chain is Ribulose bisphosphate carboxylase large chain, found in Platanus occidentalis (Sycamore).